We begin with the raw amino-acid sequence, 358 residues long: UDP-N-acetylglucosamine--N-acetylmuramyl-(pentapeptide) pyrophosphoryl-undecaprenol N-acetylglucosamine transferase (358 aa).

UDP-N-acetyl-alpha-D-glucosamine is bound by residues 11 to 13, N120, R161, S188, and Q282; that span reads TGG.

Belongs to the glycosyltransferase 28 family. MurG subfamily.

The protein resides in the cell inner membrane. The catalysed reaction is di-trans,octa-cis-undecaprenyl diphospho-N-acetyl-alpha-D-muramoyl-L-alanyl-D-glutamyl-meso-2,6-diaminopimeloyl-D-alanyl-D-alanine + UDP-N-acetyl-alpha-D-glucosamine = di-trans,octa-cis-undecaprenyl diphospho-[N-acetyl-alpha-D-glucosaminyl-(1-&gt;4)]-N-acetyl-alpha-D-muramoyl-L-alanyl-D-glutamyl-meso-2,6-diaminopimeloyl-D-alanyl-D-alanine + UDP + H(+). The protein operates within cell wall biogenesis; peptidoglycan biosynthesis. In terms of biological role, cell wall formation. Catalyzes the transfer of a GlcNAc subunit on undecaprenyl-pyrophosphoryl-MurNAc-pentapeptide (lipid intermediate I) to form undecaprenyl-pyrophosphoryl-MurNAc-(pentapeptide)GlcNAc (lipid intermediate II). The chain is UDP-N-acetylglucosamine--N-acetylmuramyl-(pentapeptide) pyrophosphoryl-undecaprenol N-acetylglucosamine transferase from Synechococcus sp. (strain WH7803).